The following is a 188-amino-acid chain: dITP/XTP pyrophosphatase (188 aa).

Substrate is bound at residue 7-12 (TGNIGK). Residues Glu36 and Asp65 each coordinate Mg(2+). Catalysis depends on Asp65, which acts as the Proton acceptor. Residues Ser66, 141–144 (FGYD), Lys164, and 169–170 (HR) each bind substrate.

The protein belongs to the HAM1 NTPase family. As to quaternary structure, homodimer. Requires Mg(2+) as cofactor.

The catalysed reaction is XTP + H2O = XMP + diphosphate + H(+). It catalyses the reaction dITP + H2O = dIMP + diphosphate + H(+). It carries out the reaction ITP + H2O = IMP + diphosphate + H(+). Its function is as follows. Pyrophosphatase that catalyzes the hydrolysis of nucleoside triphosphates to their monophosphate derivatives, with a high preference for the non-canonical purine nucleotides XTP (xanthosine triphosphate), dITP (deoxyinosine triphosphate) and ITP. Seems to function as a house-cleaning enzyme that removes non-canonical purine nucleotides from the nucleotide pool, thus preventing their incorporation into DNA/RNA and avoiding chromosomal lesions. The sequence is that of dITP/XTP pyrophosphatase from Methanopyrus kandleri (strain AV19 / DSM 6324 / JCM 9639 / NBRC 100938).